We begin with the raw amino-acid sequence, 76 residues long: Vasotab-TY1 (76 aa).

The signal sequence occupies residues 1 to 21; that stretch reads MKFTLFSVLVVLLIATFVAAD. The Kazal-like domain occupies 22-76; the sequence is DCPRICTADFRPVCGTPSGGRRSANRTFGNQCSLDSHNCLNKGDTYDKLHDGECK. 3 disulfides stabilise this stretch: Cys-23–Cys-60, Cys-27–Cys-53, and Cys-35–Cys-75.

As to expression, expressed by the salivary gland.

The protein resides in the secreted. Vasodilator protein that inhibits vasoconstriction of isolated rat femoral artery induced by phenylephrine. Since platelet aggregation and vasoconstriction are key hemostatic responses, particularly in small wounds, this protein likely participates in the antihemostatic responses during blood feeding. Blocks L-type calcium channels (Cav1/CACNA1) in left ventricular myocytes isolated from rat hearts. The sequence is that of Vasotab-TY1 from Tabanus yao (Horsefly).